Here is a 906-residue protein sequence, read N- to C-terminus: Protein translocase subunit SecA (906 aa).

ATP is bound by residues Gln-89, 107–111 (GEGKT), and Asp-502. A disordered region spans residues 829–898 (EAPPEPELPP…ACPCGSGKKY (70 aa)). Residues 858-877 (WSDHQHDERNVPAAERDPAD) show a composition bias toward basic and acidic residues. Cys-890, Cys-892, Cys-901, and His-902 together coordinate Zn(2+).

Belongs to the SecA family. In terms of assembly, monomer and homodimer. Part of the essential Sec protein translocation apparatus which comprises SecA, SecYEG and auxiliary proteins SecDF-YajC and YidC. The cofactor is Zn(2+).

Its subcellular location is the cell inner membrane. The protein resides in the cytoplasm. It carries out the reaction ATP + H2O + cellular proteinSide 1 = ADP + phosphate + cellular proteinSide 2.. Part of the Sec protein translocase complex. Interacts with the SecYEG preprotein conducting channel. Has a central role in coupling the hydrolysis of ATP to the transfer of proteins into and across the cell membrane, serving both as a receptor for the preprotein-SecB complex and as an ATP-driven molecular motor driving the stepwise translocation of polypeptide chains across the membrane. In Brucella anthropi (strain ATCC 49188 / DSM 6882 / CCUG 24695 / JCM 21032 / LMG 3331 / NBRC 15819 / NCTC 12168 / Alc 37) (Ochrobactrum anthropi), this protein is Protein translocase subunit SecA.